Here is a 1052-residue protein sequence, read N- to C-terminus: Calmin (1052 aa).

The interval 1-288 is actin-binding; it reads MAAQEWDWFQ…IVTYVAQFLE (288 aa). In terms of domain architecture, Calponin-homology (CH) 1 spans 32-139; that stretch reads NVQKRTFTRW…LIWNIILFFQ (108 aa). Low complexity predominate over residues 148–168; the sequence is SRSSPSSSLSPGSGGTDSDSS. Residues 148 to 178 are disordered; the sequence is SRSSPSSSLSPGSGGTDSDSSYPPTPTTERS. The Calponin-homology (CH) 2 domain maps to 187–291; sequence RKAIKTLLSW…YVAQFLERFP (105 aa). Disordered regions lie at residues 391-420, 455-545, 585-727, and 758-929; these read STGK…SNSL, KATK…TLLA, STSQ…SPPL, and GEDL…DSSI. Basic and acidic residues-rich tracts occupy residues 455–465 and 472–495; these read KATKELSKQDG and VSKE…DKVP. Residues 509 to 529 show a composition bias toward polar residues; sequence AQPSQDSSFCNGTVESPSSQG. Ser537 carries the phosphoserine modification. Composition is skewed to basic and acidic residues over residues 594-614, 622-651, and 659-669; these read PSSH…AEKP, PRAE…EDQG, and PADKKPKVYEK. Residue Ser679 is modified to Phosphoserine. Thr710 bears the Phosphothreonine mark. The span at 711–720 shows a compositional bias: basic and acidic residues; it reads LRSHSEEGLD. A Phosphoserine modification is found at Ser724. Residues 759–773 show a composition bias toward basic and acidic residues; it reads EDLKSEDTDLEHPED. Positions 780-791 are enriched in acidic residues; the sequence is REEEADEDEEEA. A compositionally biased stretch (low complexity) spans 792–801; the sequence is QSSQSSCSFS. Residues 836-849 are compositionally biased toward basic and acidic residues; that stretch reads SHEDHQPKETKENG. Ser856 is subject to Phosphoserine. Residues 880–889 are compositionally biased toward basic residues; it reads SKKKEKRKHM. Ser925 bears the Phosphoserine mark. A helical; Anchor for type IV membrane protein transmembrane segment spans residues 1027 to 1047; sequence VIYFILFLWLLVYCLLLFPQL.

Expressed in testis. Expressed during testis maturation process and in maturing spermatids. In brain, it is expressed in neurons of the hippocampus, cerebral cortex, and thalamus, Purkinje cells, and also in the choroid plexus and ependymal cells. Expressed predominantly in dendrites and cell bodies of the neurons, but not in axons. The level of expression increases during the period of maturation of the mouse brain after birth.

Its subcellular location is the membrane. It is found in the cytoplasm. The polypeptide is Calmin (Clmn) (Mus musculus (Mouse)).